Reading from the N-terminus, the 477-residue chain is Ankyrin repeat, SAM and basic leucine zipper domain-containing protein 1 (477 aa).

Ser-17, Ser-18, and Ser-20 each carry phosphoserine. ANK repeat units follow at residues 46-76 (EKKEKFKKALTTGDVSLVQELLDSGIISVDA), 80-109 (YGWTPLMYAASVANAELVRVLLDRGANASF), 112-146 (DKQTILITACSAHGSEEQILKCVELLLSRNADPNV), 150-179 (RLMTPIMYAARDGHTQVVALLVAHGAEVNT), 183-212 (NGYTALTWAARQGRKSIVLKLLELGANKML), and 216-245 (DGKLPSEIAKRNKHHEIFSLLSFTLNPLEG). In terms of domain architecture, SAM spans 274–336 (SYAAFGDLEV…KILTALKELE (63 aa)).

Interacts with DDX4, PIWIL1, RANBP9 and TDRD1.

It localises to the cytoplasm. Plays a central role during spermatogenesis by repressing transposable elements and preventing their mobilization, which is essential for the germline integrity. Acts via the piRNA metabolic process, which mediates the repression of transposable elements during meiosis by forming complexes composed of piRNAs and Piwi proteins and governs the methylation and subsequent repression of transposons. Its association with pi-bodies suggests a participation in the primary piRNAs metabolic process. Required prior to the pachytene stage to facilitate the production of multiple types of piRNAs, including those associated with repeats involved in the regulation of retrotransposons. May act by mediating protein-protein interactions during germ cell maturation. The chain is Ankyrin repeat, SAM and basic leucine zipper domain-containing protein 1 (ASZ1) from Ateles geoffroyi (Black-handed spider monkey).